We begin with the raw amino-acid sequence, 126 residues long: Aspartate 1-decarboxylase (126 aa).

The active-site Schiff-base intermediate with substrate; via pyruvic acid is serine 25. Serine 25 carries the post-translational modification Pyruvic acid (Ser). A substrate-binding site is contributed by threonine 57. The active-site Proton donor is the tyrosine 58. 73–75 (GAA) is a substrate binding site.

Belongs to the PanD family. As to quaternary structure, heterooctamer of four alpha and four beta subunits. Pyruvate is required as a cofactor. In terms of processing, is synthesized initially as an inactive proenzyme, which is activated by self-cleavage at a specific serine bond to produce a beta-subunit with a hydroxyl group at its C-terminus and an alpha-subunit with a pyruvoyl group at its N-terminus.

It localises to the cytoplasm. The enzyme catalyses L-aspartate + H(+) = beta-alanine + CO2. It participates in cofactor biosynthesis; (R)-pantothenate biosynthesis; beta-alanine from L-aspartate: step 1/1. Catalyzes the pyruvoyl-dependent decarboxylation of aspartate to produce beta-alanine. This is Aspartate 1-decarboxylase from Methylococcus capsulatus (strain ATCC 33009 / NCIMB 11132 / Bath).